We begin with the raw amino-acid sequence, 117 residues long: MISIILVMIGGGFGAIARSAITDYFNHKFTSKLPIATLIVNLVGSFLIGLTIGLSISISWFPAFFVTGFLGGLTTFSTLAKELTLMMTPKFNINLFLNYSLLQFIIGFIACYIGYHI.

The next 2 membrane-spanning stretches (helical) occupy residues 1-21 (MISI…RSAI) and 46-66 (FLIG…AFFV). Residues Gly-71 and Thr-74 each coordinate Na(+). The helical transmembrane segment at 95-115 (LFLNYSLLQFIIGFIACYIGY) threads the bilayer.

This sequence belongs to the fluoride channel Fluc/FEX (TC 1.A.43) family.

The protein localises to the cell membrane. It carries out the reaction fluoride(in) = fluoride(out). Na(+) is not transported, but it plays an essential structural role and its presence is essential for fluoride channel function. Its function is as follows. Fluoride-specific ion channel. Important for reducing fluoride concentration in the cell, thus reducing its toxicity. In Staphylococcus aureus (strain NCTC 8325 / PS 47), this protein is Fluoride-specific ion channel FluC 2.